A 147-amino-acid chain; its full sequence is Microsomal glutathione S-transferase 2 (147 aa).

3 helical membrane-spanning segments follow: residues 6–26, 59–79, and 111–131; these read ILLAAVSILSACQQSYFALQV, FYPIFIITLWMAGWYFNQVFA, and SLGILALLTLLGALGIANSFL.

Belongs to the MAPEG family. Homotrimer. As to expression, liver, spleen, skeletal muscle, heart, adrenals, pancreas, prostate, testis, fetal liver, and fetal spleen. Very low expression in lung, brain, placenta and bone marrow. Abundantly expressed in human umbilical vein endothelial cells (at protein level).

The protein localises to the endoplasmic reticulum membrane. It is found in the microsome membrane. It catalyses the reaction RX + glutathione = an S-substituted glutathione + a halide anion + H(+). The catalysed reaction is 1-chloro-2,4-dinitrobenzene + glutathione = 2,4-dinitrophenyl-S-glutathione + chloride + H(+). The enzyme catalyses leukotriene C4 = leukotriene A4 + glutathione. It carries out the reaction (5S)-hydroperoxy-(6E,8Z,11Z,14Z)-eicosatetraenoate + 2 glutathione = (5S)-hydroxy-(6E,8Z,11Z,14Z)-eicosatetraenoate + glutathione disulfide + H2O. Its activity is regulated as follows. Each monomer can bind on GSH molecule but only one subunit is catalytically active. Functionally, catalyzes several different glutathione-dependent reactions. Catalyzes the glutathione-dependent reduction of lipid hydroperoxides, such as 5-HPETE. Has glutathione transferase activity, toward xenobiotic electrophiles, such as 1-chloro-2, 4-dinitrobenzene (CDNB). Also catalyzes the conjugation of leukotriene A4 with reduced glutathione to form leukotriene C4 (LTC4). Involved in oxidative DNA damage induced by ER stress and anticancer agents by activating LTC4 biosynthetic machinery in nonimmune cells. In Homo sapiens (Human), this protein is Microsomal glutathione S-transferase 2 (MGST2).